A 349-amino-acid chain; its full sequence is Protein RecA (349 aa).

ATP is bound at residue 66 to 73 (GPESSGKT).

It belongs to the RecA family.

The protein resides in the cytoplasm. Its function is as follows. Can catalyze the hydrolysis of ATP in the presence of single-stranded DNA, the ATP-dependent uptake of single-stranded DNA by duplex DNA, and the ATP-dependent hybridization of homologous single-stranded DNAs. It interacts with LexA causing its activation and leading to its autocatalytic cleavage. The protein is Protein RecA of Psychrobacter sp. (strain PRwf-1).